Consider the following 65-residue polypeptide: Putative beta-neurotoxin RjAa12 (65 aa).

Positions 1-64 (KEGYPVGRDG…VWDSSTNKCG (64 aa)) constitute an LCN-type CS-alpha/beta domain. 4 disulfides stabilise this stretch: C11–C63, C15–C37, C22–C44, and C26–C46.

Belongs to the long (4 C-C) scorpion toxin superfamily. Sodium channel inhibitor family. Beta subfamily. As to expression, expressed by the venom gland.

The protein resides in the secreted. In terms of biological role, beta toxins bind voltage-independently at site-4 of sodium channels (Nav) and shift the voltage of activation toward more negative potentials thereby affecting sodium channel activation and promoting spontaneous and repetitive firing. This Rhopalurus junceus (Caribbean blue scorpion) protein is Putative beta-neurotoxin RjAa12.